The chain runs to 38 residues: Large ribosomal subunit protein bL36 (38 aa).

It belongs to the bacterial ribosomal protein bL36 family.

The polypeptide is Large ribosomal subunit protein bL36 (Flavobacterium psychrophilum (strain ATCC 49511 / DSM 21280 / CIP 103535 / JIP02/86)).